A 356-amino-acid polypeptide reads, in one-letter code: Torsin-like protein (356 aa).

Positions 1–18 (MKLDYVLLLLFHLCFVNT) are cleaved as a signal peptide. ATP is bound at residue 110–117 (GYTGSGKN). N-linked (GlcNAc...) asparagine glycosylation is found at Asn125 and Asn250.

This sequence belongs to the ClpA/ClpB family. Torsin subfamily.

Its subcellular location is the endoplasmic reticulum lumen. Its function is as follows. May serve as a molecular chaperone assisting in the proper folding of secreted and/or membrane proteins. In Caenorhabditis elegans, this protein is Torsin-like protein (ooc-5).